Here is a 138-residue protein sequence, read N- to C-terminus: Small ribosomal subunit protein uS11 (138 aa).

A compositionally biased stretch (low complexity) spans Met-1 to Lys-12. 2 disordered regions span residues Met-1–Ile-32 and Ile-119–Val-138. The span at Lys-13–Lys-22 shows a compositional bias: basic residues.

The protein belongs to the universal ribosomal protein uS11 family. In terms of assembly, part of the 30S ribosomal subunit. Interacts with proteins S7 and S18. Binds to IF-3.

Functionally, located on the platform of the 30S subunit, it bridges several disparate RNA helices of the 16S rRNA. Forms part of the Shine-Dalgarno cleft in the 70S ribosome. The sequence is that of Small ribosomal subunit protein uS11 from Mycolicibacterium smegmatis (strain ATCC 700084 / mc(2)155) (Mycobacterium smegmatis).